The following is an 86-amino-acid chain: Omega-theraphotoxin-Hhn1f 4 (86 aa).

Residues 1-21 form the signal peptide; sequence MKSIVFVALFGLALLAVVCSA. A propeptide spanning residues 22-50 is cleaved from the precursor; that stretch reads SEDAHKELLKEVVRAMVVDKTDAVQAGER. Cystine bridges form between C52-C66, C59-C71, and C65-C78.

This sequence belongs to the neurotoxin 10 (Hwtx-1) family. 17 (Hntx-9) subfamily. In terms of tissue distribution, expressed by the venom gland.

It is found in the secreted. Functionally, ion channel inhibitor. The polypeptide is Omega-theraphotoxin-Hhn1f 4 (Cyriopagopus hainanus (Chinese bird spider)).